The chain runs to 448 residues: N-succinylarginine dihydrolase (448 aa).

Residues 19-28, asparagine 110, and 137-138 contribute to the substrate site; these read AGLSSGNIAS and HR. The active site involves glutamate 174. Arginine 216 is a binding site for substrate. The active site involves histidine 252. The substrate site is built by aspartate 254 and asparagine 366. Cysteine 372 functions as the Nucleophile in the catalytic mechanism.

It belongs to the succinylarginine dihydrolase family. As to quaternary structure, homodimer.

The enzyme catalyses N(2)-succinyl-L-arginine + 2 H2O + 2 H(+) = N(2)-succinyl-L-ornithine + 2 NH4(+) + CO2. The protein operates within amino-acid degradation; L-arginine degradation via AST pathway; L-glutamate and succinate from L-arginine: step 2/5. Its function is as follows. Catalyzes the hydrolysis of N(2)-succinylarginine into N(2)-succinylornithine, ammonia and CO(2). This is N-succinylarginine dihydrolase from Legionella pneumophila (strain Lens).